We begin with the raw amino-acid sequence, 1269 residues long: Regulator of nonsense transcripts 2 (1269 aa).

Disordered regions lie at residues 1–125 (MPAE…EKEE) and 143–162 (LRSK…FFSR). Residues 57 to 133 (KKRLEEDKRK…EESLQLHQEA (77 aa)) are a coiled coil. The sufficient for interaction with UPF1 stretch occupies residues 94 to 132 (KKKQEEEERKKQEEQAKRQQEEAAAQLKEKEESLQLHQE). The region spanning 168 to 396 (KKNTAFVKKL…KGELSEDRHK (229 aa)) is the MIF4G 1 domain. Disordered regions lie at residues 422-444 (NMPD…DIFT) and 487-518 (KSQN…DLEL). 2 stretches are compositionally biased toward basic and acidic residues: residues 427-438 (PQDKPTPEEHGP) and 487-511 (KSQN…KEAS). 2 MIF4G domains span residues 571–755 (QQLP…YCNP) and 774–984 (RKLL…LRPK). The tract at residues 709–926 (GRFLFRSPES…IRLVCTILDT (218 aa)) is sufficient for interaction with UPF3A and UPF3B. The segment at 755-1269 (PPPAEKTVRK…LIFKTGGRRR (515 aa)) is sufficient for interaction with EIF4A1 and EIF1. Residues 837–857 (EDVGIHVVDGVLEDIRLGMEV) are binds to UPF3B. The segment at 1017–1090 (SKDSMTEGEN…KENETDEENA (74 aa)) is disordered. Residues 1025–1073 (ENLEEDEEEEEGGAETEEQSGNESEVNEPEEEEGSEEEEEGEEEEEENT) are compositionally biased toward acidic residues. Residues 1081 to 1269 (KENETDEENA…LIFKTGGRRR (189 aa)) are sufficient for interaction with UPF1 C-terminus. The residue at position 1085 (Thr1085) is a Phosphothreonine. 2 interaction with UPF1 regions span residues 1102–1126 (VPCV…QQRS) and 1164–1204 (DTMP…AEQE). A necessary for interaction with UPF1 region spans residues 1102-1195 (VPCVEDEDFI…PMSSQLAANH (94 aa)). The interval 1218–1269 (ERQEQEDYQEMLQSLAQRPAPANTNRERRPRYQHPKGAPNADLIFKTGGRRR) is disordered.

Found in a post-splicing messenger ribonucleoprotein (mRNP) complex. Associates with the exon junction complex (EJC). Interacts with SMG1, EST1A, UPF3A, UPF3B, EIF4A1 and EIF1. Interacts with UPF1; interaction is promoted by TDRD6. Interacts with DDX4. Localized in male germ cells.

Its subcellular location is the cytoplasm. It localises to the perinuclear region. In terms of biological role, involved in nonsense-mediated decay (NMD) of mRNAs containing premature stop codons by associating with the nuclear exon junction complex (EJC). Recruited by UPF3B associated with the EJC core at the cytoplasmic side of the nuclear envelope and the subsequent formation of an UPF1-UPF2-UPF3 surveillance complex (including UPF1 bound to release factors at the stalled ribosome) is believed to activate NMD. In cooperation with UPF3B stimulates both ATPase and RNA helicase activities of UPF1. Binds spliced mRNA. This chain is Regulator of nonsense transcripts 2, found in Mus musculus (Mouse).